We begin with the raw amino-acid sequence, 1153 residues long: ATP-dependent helicase/deoxyribonuclease subunit B (1153 aa).

Residue 8–15 (GRAGSGKS) participates in ATP binding. Residues Cys786, Cys1104, Cys1107, and Cys1113 each contribute to the [4Fe-4S] cluster site.

The protein belongs to the helicase family. AddB/RexB type 1 subfamily. Heterodimer of AddA and AddB. Mg(2+) is required as a cofactor. The cofactor is [4Fe-4S] cluster.

Functionally, the heterodimer acts as both an ATP-dependent DNA helicase and an ATP-dependent, dual-direction single-stranded exonuclease. Recognizes the chi site generating a DNA molecule suitable for the initiation of homologous recombination. The AddB subunit has 5' -&gt; 3' nuclease activity but not helicase activity. This Clostridium acetobutylicum (strain ATCC 824 / DSM 792 / JCM 1419 / IAM 19013 / LMG 5710 / NBRC 13948 / NRRL B-527 / VKM B-1787 / 2291 / W) protein is ATP-dependent helicase/deoxyribonuclease subunit B.